The sequence spans 315 residues: Olfactory receptor 4E1 (315 aa).

The Extracellular portion of the chain corresponds to Met1–Ser33. Asn8 carries an N-linked (GlcNAc...) asparagine glycan. Residues Met34–Ile54 form a helical membrane-spanning segment. Residues Tyr55 to Thr61 lie on the Cytoplasmic side of the membrane. The helical transmembrane segment at Pro62 to Val82 threads the bilayer. Residues Pro83 to Cys101 are Extracellular-facing. Cysteines 101 and 183 form a disulfide. The helical transmembrane segment at Val102–Met122 threads the bilayer. Residues Ala123–Lys143 are Cytoplasmic-facing. A helical membrane pass occupies residues Val144–Thr164. Over Ser165–Gly208 the chain is Extracellular. Residues Leu209–Leu229 traverse the membrane as a helical segment. Residues Arg230–Ala240 are Cytoplasmic-facing. A helical transmembrane segment spans residues Leu241–Ile261. Over Tyr262–Asp272 the chain is Extracellular. A helical transmembrane segment spans residues Lys273–Leu293. Residues Arg294–Lys315 lie on the Cytoplasmic side of the membrane.

This sequence belongs to the G-protein coupled receptor 1 family.

It localises to the cell membrane. In terms of biological role, odorant receptor. In Homo sapiens (Human), this protein is Olfactory receptor 4E1 (OR4E1).